Here is a 419-residue protein sequence, read N- to C-terminus: UDP-N-acetylglucosamine 1-carboxyvinyltransferase (419 aa).

A phosphoenolpyruvate-binding site is contributed by 22–23; it reads KN. Arg-91 is a binding site for UDP-N-acetyl-alpha-D-glucosamine. The active-site Proton donor is the Cys-115. 2-(S-cysteinyl)pyruvic acid O-phosphothioketal is present on Cys-115. UDP-N-acetyl-alpha-D-glucosamine-binding positions include 120-124, 160-163, Asp-305, and Val-327; these read RPVDL and KVSV.

Belongs to the EPSP synthase family. MurA subfamily.

It is found in the cytoplasm. The enzyme catalyses phosphoenolpyruvate + UDP-N-acetyl-alpha-D-glucosamine = UDP-N-acetyl-3-O-(1-carboxyvinyl)-alpha-D-glucosamine + phosphate. It participates in cell wall biogenesis; peptidoglycan biosynthesis. Cell wall formation. Adds enolpyruvyl to UDP-N-acetylglucosamine. This is UDP-N-acetylglucosamine 1-carboxyvinyltransferase from Escherichia fergusonii (strain ATCC 35469 / DSM 13698 / CCUG 18766 / IAM 14443 / JCM 21226 / LMG 7866 / NBRC 102419 / NCTC 12128 / CDC 0568-73).